The sequence spans 250 residues: Corrinoid adenosyltransferase MMAB (250 aa).

The N-terminal 32 residues, 1–32 (MAVCGLGSRLGLGSRLGLRGCFGAARLLYPRF), are a transit peptide targeting the mitochondrion. Positions 34–59 (SRGPQGVEDGDRPQPSSKTPRIPKIY) are disordered. ATP contacts are provided by residues 60–63 (TKTG), 68–69 (SS), and Lys-78. Phosphoserine is present on Ser-134. 190 to 194 (RRAER) contacts ATP. Residue Lys-211 is modified to N6-succinyllysine. Position 214 (Asn-214) interacts with ATP. Position 230 is an N6-acetyllysine; alternate (Lys-230). Lys-230 bears the N6-succinyllysine; alternate mark.

It belongs to the Cob(I)alamin adenosyltransferase family. Homotrimer. Expressed in liver and skeletal muscle.

It localises to the mitochondrion. The catalysed reaction is cob(I)alamin-[corrinoid adenosyltransferase] + ATP = apo-[corrinoid adenosyltransferase] + adenosylcob(III)alamin + triphosphate. Converts cob(I)alamin to adenosylcobalamin (adenosylcob(III)alamin), a coenzyme for methylmalonyl-CoA mutase, therefore participates in the final step of the vitamin B12 conversion. Generates adenosylcobalamin (AdoCbl) and directly delivers the cofactor to MUT in a transfer that is stimulated by ATP-binding to MMAB and gated by MMAA. In Homo sapiens (Human), this protein is Corrinoid adenosyltransferase MMAB.